A 138-amino-acid polypeptide reads, in one-letter code: Thyrotropin subunit beta (138 aa).

Residues 1 to 20 (MTAIFLMSMLFGLACGQAMS) form the signal peptide. Cystine bridges form between Cys22–Cys72, Cys36–Cys87, Cys39–Cys125, Cys47–Cys103, Cys51–Cys105, and Cys108–Cys115. Residue Asn43 is glycosylated (N-linked (GlcNAc...) asparagine). The propeptide occupies 133 to 138 (VLEFSI).

It belongs to the glycoprotein hormones subunit beta family. As to quaternary structure, heterodimer of a common alpha chain and a unique beta chain which confers biological specificity to thyrotropin, lutropin, follitropin and gonadotropin.

Its subcellular location is the secreted. In terms of biological role, indispensable for the control of thyroid structure and metabolism. This chain is Thyrotropin subunit beta (TSHB), found in Sus scrofa (Pig).